The primary structure comprises 381 residues: S-adenosylmethionine synthase (381 aa).

An ATP-binding site is contributed by His-15. Position 17 (Asp-17) interacts with Mg(2+). Residue Glu-43 participates in K(+) binding. The L-methionine site is built by Glu-56 and Gln-99. The tract at residues 99–109 (QSPDINQGVDR) is flexible loop. ATP is bound by residues 164-166 (DAK), 230-231 (RF), Asp-239, 245-246 (RK), Ala-262, and Lys-266. Asp-239 lines the L-methionine pocket. Lys-270 serves as a coordination point for L-methionine.

It belongs to the AdoMet synthase family. Homotetramer; dimer of dimers. The cofactor is Mg(2+). K(+) serves as cofactor.

The protein localises to the cytoplasm. The catalysed reaction is L-methionine + ATP + H2O = S-adenosyl-L-methionine + phosphate + diphosphate. The protein operates within amino-acid biosynthesis; S-adenosyl-L-methionine biosynthesis; S-adenosyl-L-methionine from L-methionine: step 1/1. Its function is as follows. Catalyzes the formation of S-adenosylmethionine (AdoMet) from methionine and ATP. The overall synthetic reaction is composed of two sequential steps, AdoMet formation and the subsequent tripolyphosphate hydrolysis which occurs prior to release of AdoMet from the enzyme. The chain is S-adenosylmethionine synthase from Alteromonas mediterranea (strain DSM 17117 / CIP 110805 / LMG 28347 / Deep ecotype).